The following is a 95-amino-acid chain: MAPVIKQQDDLLLNLYIQPKASRDQIVGVHGEELKIAITAPPVDGKANAHLIKYLSKAFKVPKGDINILKGEQGRHKQVKVISPRVIPENISSQL.

The protein belongs to the UPF0235 family.

In Shewanella woodyi (strain ATCC 51908 / MS32), this protein is UPF0235 protein Swoo_1329.